The sequence spans 1417 residues: DNA-directed RNA polymerase subunit beta' (1417 aa).

Residues C68, C70, C83, and C86 each coordinate Zn(2+). Mg(2+) is bound by residues D458, D460, and D462. Residues C811, C884, C891, and C894 each coordinate Zn(2+).

Belongs to the RNA polymerase beta' chain family. In terms of assembly, the RNAP catalytic core consists of 2 alpha, 1 beta, 1 beta' and 1 omega subunit. When a sigma factor is associated with the core the holoenzyme is formed, which can initiate transcription. Mg(2+) serves as cofactor. The cofactor is Zn(2+).

The catalysed reaction is RNA(n) + a ribonucleoside 5'-triphosphate = RNA(n+1) + diphosphate. DNA-dependent RNA polymerase catalyzes the transcription of DNA into RNA using the four ribonucleoside triphosphates as substrates. This chain is DNA-directed RNA polymerase subunit beta', found in Francisella tularensis subsp. holarctica (strain OSU18).